Consider the following 268-residue polypeptide: Leucyl/phenylalanyl-tRNA--protein transferase (268 aa).

It belongs to the L/F-transferase family.

It localises to the cytoplasm. The enzyme catalyses N-terminal L-lysyl-[protein] + L-leucyl-tRNA(Leu) = N-terminal L-leucyl-L-lysyl-[protein] + tRNA(Leu) + H(+). It catalyses the reaction N-terminal L-arginyl-[protein] + L-leucyl-tRNA(Leu) = N-terminal L-leucyl-L-arginyl-[protein] + tRNA(Leu) + H(+). It carries out the reaction L-phenylalanyl-tRNA(Phe) + an N-terminal L-alpha-aminoacyl-[protein] = an N-terminal L-phenylalanyl-L-alpha-aminoacyl-[protein] + tRNA(Phe). Functions in the N-end rule pathway of protein degradation where it conjugates Leu, Phe and, less efficiently, Met from aminoacyl-tRNAs to the N-termini of proteins containing an N-terminal arginine or lysine. The sequence is that of Leucyl/phenylalanyl-tRNA--protein transferase from Zymomonas mobilis subsp. mobilis (strain ATCC 31821 / ZM4 / CP4).